The primary structure comprises 183 residues: Protein Syd (183 aa).

Belongs to the Syd family.

It is found in the cell inner membrane. Interacts with the SecY protein in vivo. May bind preferentially to an uncomplexed state of SecY, thus functioning either as a chelating agent for excess SecY in the cell or as a regulatory factor that negatively controls the translocase function. The protein is Protein Syd of Aliivibrio fischeri (strain MJ11) (Vibrio fischeri).